The chain runs to 367 residues: tRNA-specific 2-thiouridylase MnmA (367 aa).

ATP-binding positions include 6–13 (AMSGGVDS) and M32. The Nucleophile role is filled by C101. A disulfide bridge connects residues C101 and C193. G125 is a binding site for ATP. The tract at residues 143 to 145 (KDQ) is interaction with tRNA. C193 (cysteine persulfide intermediate) is an active-site residue.

This sequence belongs to the MnmA/TRMU family.

Its subcellular location is the cytoplasm. The catalysed reaction is S-sulfanyl-L-cysteinyl-[protein] + uridine(34) in tRNA + AH2 + ATP = 2-thiouridine(34) in tRNA + L-cysteinyl-[protein] + A + AMP + diphosphate + H(+). In terms of biological role, catalyzes the 2-thiolation of uridine at the wobble position (U34) of tRNA, leading to the formation of s(2)U34. The sequence is that of tRNA-specific 2-thiouridylase MnmA from Mycobacterium tuberculosis (strain CDC 1551 / Oshkosh).